Here is a 91-residue protein sequence, read N- to C-terminus: HssA/B-like protein 24 (91 aa).

Belongs to the hssA/B family.

This Dictyostelium discoideum (Social amoeba) protein is HssA/B-like protein 24 (hssl24).